Consider the following 195-residue polypeptide: Fe/S biogenesis protein NfuA (195 aa).

[4Fe-4S] cluster-binding residues include C152 and C155.

It belongs to the NfuA family. As to quaternary structure, homodimer. It depends on [4Fe-4S] cluster as a cofactor.

In terms of biological role, involved in iron-sulfur cluster biogenesis. Binds a 4Fe-4S cluster, can transfer this cluster to apoproteins, and thereby intervenes in the maturation of Fe/S proteins. Could also act as a scaffold/chaperone for damaged Fe/S proteins. This chain is Fe/S biogenesis protein NfuA, found in Vibrio cholerae serotype O1 (strain ATCC 39541 / Classical Ogawa 395 / O395).